Consider the following 593-residue polypeptide: Replication protein E1 (593 aa).

Positions 72–74 (KRK) match the Nuclear localization signal motif. A Nuclear export signal motif is present at residues 86 to 95 (LSPRLSAVHI). Ser87 is modified (phosphoserine; by host). Positions 134-297 (NQNGAECELN…TIVEHQLASA (164 aa)) are DNA-binding region. The SF3 helicase domain occupies 382–546 (EEWKEIVQFL…LPMSDKDEPL (165 aa)). 422–429 (GPPDTGKS) lines the ATP pocket. Residue Lys503 forms a Glycyl lysine isopeptide (Lys-Gly) (interchain with G-Cter in SUMO) linkage.

This sequence belongs to the papillomaviridae E1 protein family. Can form hexamers. Interacts with E2 protein; this interaction increases E1 DNA binding specificity. Interacts with host DNA polymerase subunit POLA2. Interacts with host single stranded DNA-binding protein RPA1. Interacts with host TOP1; this interaction stimulates the enzymatic activity of TOP1. Post-translationally, phosphorylated. In terms of processing, sumoylated.

Its subcellular location is the host nucleus. The enzyme catalyses Couples ATP hydrolysis with the unwinding of duplex DNA by translocating in the 3'-5' direction.. It catalyses the reaction ATP + H2O = ADP + phosphate + H(+). Functionally, ATP-dependent DNA 3'-5' helicase required for initiation of viral DNA replication. It forms a complex with the viral E2 protein. The E1-E2 complex binds to the replication origin which contains binding sites for both proteins. During the initial step, a dimer of E1 interacts with a dimer of protein E2 leading to a complex that binds the viral origin of replication with high specificity. Then, a second dimer of E1 displaces the E2 dimer in an ATP-dependent manner to form the E1 tetramer. Following this, two E1 monomers are added to each half of the site, which results in the formation of two E1 trimers on the viral ori. Subsequently, two hexamers will be created. The double hexamer acts as a bi-directional helicase machinery and unwinds the viral DNA and then recruits the host DNA polymerase to start replication. This chain is Replication protein E1, found in Human papillomavirus type 48.